Reading from the N-terminus, the 836-residue chain is Probable RING finger protein 207 homolog (836 aa).

An RING-type zinc finger spans residues 8-42; the sequence is CTICKNDFEEPILFSCQHTTCRKCSNGSPSCKTCS. The B box-type 1; atypical zinc-finger motif lies at 68 to 115; the sequence is EEMEQCANCEQITLPMFYCETCQQSLCLACRNVTHQARMFSSHKIISS. Zn(2+)-binding residues include Cys-73, Cys-76, Cys-97, and His-102. The B box-type 2; degenerate zinc-finger motif lies at 122–164; it reads YSSSLCKDHNEPYILYCSDVRKLVCIQCFNGRPLEERHSFISI. Residues 527–557 are a coiled coil; it reads QNRIMAIEKEEENRRLNQEAKKKEELAGQSA. Positions 540–552 are enriched in basic and acidic residues; it reads RRLNQEAKKKEEL. The interval 540 to 571 is disordered; sequence RRLNQEAKKKEELAGQSAAMKSLKHGKTKRKE. Positions 561-571 are enriched in basic residues; that stretch reads SLKHGKTKRKE.

In Caenorhabditis briggsae, this protein is Probable RING finger protein 207 homolog.